Reading from the N-terminus, the 1071-residue chain is DNA-directed RNA polymerase subunit beta (1071 aa).

Belongs to the RNA polymerase beta chain family. In terms of assembly, in plastids the minimal PEP RNA polymerase catalytic core is composed of four subunits: alpha, beta, beta', and beta''. When a (nuclear-encoded) sigma factor is associated with the core the holoenzyme is formed, which can initiate transcription.

The protein localises to the plastid. Its subcellular location is the chloroplast. It catalyses the reaction RNA(n) + a ribonucleoside 5'-triphosphate = RNA(n+1) + diphosphate. In terms of biological role, DNA-dependent RNA polymerase catalyzes the transcription of DNA into RNA using the four ribonucleoside triphosphates as substrates. In Nymphaea alba (White water-lily), this protein is DNA-directed RNA polymerase subunit beta.